The primary structure comprises 476 residues: Splicing factor ESS-2 homolog (476 aa).

Position 1 is an N-acetylmethionine (Met1). A compositionally biased stretch (low complexity) spans 1-18 (METPGASASSLLLPAASR). Disordered regions lie at residues 1–36 (METPGASASSLLLPAASRPPRKREAGEAGAATSKQR) and 91–148 (LGKM…LPSL). Residue Thr3 is modified to Phosphothreonine. A compositionally biased stretch (acidic residues) spans 133-142 (DGEAGEEEEK). Lys142 is covalently cross-linked (Glycyl lysine isopeptide (Lys-Gly) (interchain with G-Cter in SUMO2)). Phosphoserine is present on Ser292. The residue at position 386 (Thr386) is a Phosphothreonine. Phosphoserine occurs at positions 391 and 395. The interval 413–465 (ALRASYTPSPARSTHLKTPASGLQTPTSTPAPGSATRTPLTQDPASITDNLLQ) is disordered. The span at 437-451 (TPTSTPAPGSATRTP) shows a compositional bias: low complexity. Residues 452-463 (LTQDPASITDNL) show a composition bias toward polar residues.

Belongs to the ESS2 family. As to quaternary structure, identified in the spliceosome C complex. Interacts with FRA10AC1. As to expression, highly expressed in heart, brain and skeletal muscle. Detected at low levels in placenta.

It localises to the nucleus. Functionally, may be involved in pre-mRNA splicing. This chain is Splicing factor ESS-2 homolog, found in Homo sapiens (Human).